The primary structure comprises 440 residues: UDP-N-acetylmuramoylalanine--D-glutamate ligase (440 aa).

115 to 121 (GSNGKST) lines the ATP pocket.

The protein belongs to the MurCDEF family.

It is found in the cytoplasm. The catalysed reaction is UDP-N-acetyl-alpha-D-muramoyl-L-alanine + D-glutamate + ATP = UDP-N-acetyl-alpha-D-muramoyl-L-alanyl-D-glutamate + ADP + phosphate + H(+). It functions in the pathway cell wall biogenesis; peptidoglycan biosynthesis. Functionally, cell wall formation. Catalyzes the addition of glutamate to the nucleotide precursor UDP-N-acetylmuramoyl-L-alanine (UMA). This Vibrio cholerae serotype O1 (strain ATCC 39315 / El Tor Inaba N16961) protein is UDP-N-acetylmuramoylalanine--D-glutamate ligase.